Here is a 557-residue protein sequence, read N- to C-terminus: Potassium-transporting ATPase potassium-binding subunit (557 aa).

12 helical membrane passes run 5-25, 63-83, 132-152, 170-190, 253-273, 283-303, 329-349, 356-376, 379-399, 416-436, 484-504, and 526-546; these read GFLLIATFLLVLMVLARPLGS, LCAILGLNMLGLAVLFFMLLG, GLTVQNFLSAASGIAVIFALI, LLRITLWVLVPVALLIALFFI, FVQMLAIFLIPTALCFAFGEV, LLWAMSVIFVICVGVVMWAEV, VLVSSLFAVVTTAASCGAVIA, ALGGMVPMWLMQIGEVVFGGV, GLYGMMLFVLLAVFIAGLMIG, LTALAILVTPTLVLMGAALAM, LLAFCMFVGRFGVIIPVMAIA, and LFVGLLIGTVLLVGALTFIPA.

Belongs to the KdpA family. As to quaternary structure, the system is composed of three essential subunits: KdpA, KdpB and KdpC.

Its subcellular location is the cell inner membrane. Its function is as follows. Part of the high-affinity ATP-driven potassium transport (or Kdp) system, which catalyzes the hydrolysis of ATP coupled with the electrogenic transport of potassium into the cytoplasm. This subunit binds the periplasmic potassium ions and delivers the ions to the membrane domain of KdpB through an intramembrane tunnel. The chain is Potassium-transporting ATPase potassium-binding subunit from Escherichia coli O139:H28 (strain E24377A / ETEC).